The sequence spans 459 residues: Nuclear hormone receptor family member nhr-11 (459 aa).

A DNA-binding region (nuclear receptor) is located at residues 2-81 (GPLCAVCESP…AGMRSELVRS (80 aa)). 2 consecutive NR C4-type zinc fingers follow at residues 5–26 (CAVC…CKAC) and 42–69 (CAAD…LRKC). Disordered regions lie at residues 90–119 (RRKD…EEMD) and 134–162 (DLPL…SSFD). The span at 97–115 (NSDAAPNSNSPSTRQSSSP) shows a compositional bias: low complexity. In terms of domain architecture, NR LBD spans 188–458 (ENNSILQYYH…SMLHEMLNFQ (271 aa)).

This sequence belongs to the nuclear hormone receptor family.

The protein resides in the nucleus. Orphan nuclear receptor. This Caenorhabditis elegans protein is Nuclear hormone receptor family member nhr-11 (nhr-11).